The primary structure comprises 628 residues: Chaperone protein HtpG (628 aa).

The tract at residues Met1–Arg337 is a; substrate-binding. A b region spans residues Glu338–Lys554. Positions Met555–Arg628 are c.

Belongs to the heat shock protein 90 family. As to quaternary structure, homodimer.

It is found in the cytoplasm. Functionally, molecular chaperone. Has ATPase activity. In Francisella tularensis subsp. novicida (strain U112), this protein is Chaperone protein HtpG.